A 1168-amino-acid chain; its full sequence is Myosin IC heavy chain (1168 aa).

In terms of domain architecture, Myosin motor spans 7 to 666; that stretch reads HGVDDMVMLT…SVFSLEELRD (660 aa). Residue 101–108 participates in ATP binding; it reads GESGAGKT. S311 is modified (phosphoserine). The tract at residues 542–564 is actin-binding; sequence INILVATLSKCTPHYIRCIKPNE. The region spanning 704 to 892 is the TH1 domain; the sequence is KERRRLSLER…KVSVAPGLPP (189 aa). Disordered stretches follow at residues 876-909, 921-978, and 1036-1168; these read DGKV…GGAS, ILGA…APGP, and AAAP…PPGM. The segment covering 895–909 has biased composition (polar residues); it reads APNIQAPQETSGGAS. Gly residues-rich tracts occupy residues 924–939 and 950–959; these read AKGG…GGPS and PGGGGGGPSP. Low complexity predominate over residues 960–978; sequence FGGRPSPSGPPAAASAPGP. In terms of domain architecture, SH3 spans 976–1035; it reads PGPEQARALYDFAAENPDELTFNEGAVVTVINKSNPDWWEGELNGQRGVFPASYVELIPR. Residues 1040–1052 show a composition bias toward pro residues; the sequence is APGPSGGPRPAPP. Gly residues-rich tracts occupy residues 1063–1083 and 1090–1099; these read GGPG…GRGG and GRAGPPGGRG. A compositionally biased stretch (low complexity) spans 1100 to 1112; the sequence is MPAPGGAAPRGRG. Gly residues predominate over residues 1120–1141; it reads GPPGGGRGGAPPPGGMRGRGGP. Residues 1152–1161 are compositionally biased toward low complexity; it reads GGMMPPRGRA.

It belongs to the TRAFAC class myosin-kinesin ATPase superfamily. Myosin family. As to quaternary structure, myosin I heavy chain is single-headed. Dimer of a heavy and a light chain. Inability to self-assemble into filaments.

Functionally, myosin is a protein that binds to F-actin and has ATPase activity that is activated by F-actin. The chain is Myosin IC heavy chain (MIC) from Acanthamoeba castellanii (Amoeba).